A 342-amino-acid chain; its full sequence is Dihydroorotate dehydrogenase (quinone) (342 aa).

FMN is bound by residues 65-69 (AGLDK) and Thr-89. Lys-69 serves as a coordination point for substrate. 114-118 (NRMGF) contributes to the substrate binding site. Residues Asn-142 and Asn-175 each coordinate FMN. Asn-175 lines the substrate pocket. The active-site Nucleophile is the Ser-178. Residue Asn-180 coordinates substrate. The FMN site is built by Lys-220 and Thr-248. 249–250 (NT) contacts substrate. Residues Gly-271, Gly-300, and 321–322 (YT) each bind FMN.

The protein belongs to the dihydroorotate dehydrogenase family. Type 2 subfamily. In terms of assembly, monomer. Requires FMN as cofactor.

It is found in the cell membrane. It carries out the reaction (S)-dihydroorotate + a quinone = orotate + a quinol. It participates in pyrimidine metabolism; UMP biosynthesis via de novo pathway; orotate from (S)-dihydroorotate (quinone route): step 1/1. Its function is as follows. Catalyzes the conversion of dihydroorotate to orotate with quinone as electron acceptor. The sequence is that of Dihydroorotate dehydrogenase (quinone) from Burkholderia pseudomallei (strain 668).